Here is a 572-residue protein sequence, read N- to C-terminus: Mitochondrial distribution and morphology protein 34 (572 aa).

One can recognise an SMP-LTD domain in the interval 1–195; that stretch reads MAFNFNWSPL…LPAIIHRLSL (195 aa). Disordered stretches follow at residues 212–236, 321–426, 477–522, and 553–572; these read TASANGEGPGQDPLASPPQDPVDAL, VGSM…PDND, SATP…DNPT, and CGPFWDRHSQEESPPPAYGH. Residues 330-348 are compositionally biased toward low complexity; the sequence is SASMVSSQSRSSTPSHTFS. A compositionally biased stretch (basic residues) spans 358-370; it reads RHSKAHARKRKKR. The segment covering 371-381 has biased composition (basic and acidic residues); that stretch reads VVDLRRPKTTD. 2 stretches are compositionally biased toward polar residues: residues 387–400 and 500–511; these read SDESSFTESTSAPS and DSSAGSSRQLPS.

Belongs to the MDM34 family. As to quaternary structure, component of the ER-mitochondria encounter structure (ERMES) or MDM complex, composed of mmm1, mdm10, mdm12 and mdm34.

Its subcellular location is the mitochondrion outer membrane. Component of the ERMES/MDM complex, which serves as a molecular tether to connect the endoplasmic reticulum (ER) and mitochondria. Components of this complex are involved in the control of mitochondrial shape and protein biogenesis, and function in nonvesicular lipid trafficking between the ER and mitochondria. Mdm34 is required for the interaction of the ER-resident membrane protein mmm1 and the outer mitochondrial membrane-resident beta-barrel protein mdm10. The chain is Mitochondrial distribution and morphology protein 34 from Aspergillus fumigatus (strain CBS 144.89 / FGSC A1163 / CEA10) (Neosartorya fumigata).